Consider the following 611-residue polypeptide: Chaperone protein DnaK (611 aa).

At Thr-173 the chain carries Phosphothreonine; by autocatalysis. Disordered regions lie at residues 525–548 and 573–611; these read DNISEEDKSNAESKKDALKSALEG and YQQAQQAQQQAQDGAQQTQNDSNVEDAEFKEVNDDEDKK. Positions 529 to 542 are enriched in basic and acidic residues; it reads EEDKSNAESKKDAL. Residues 574–591 show a composition bias toward low complexity; sequence QQAQQAQQQAQDGAQQTQ. A compositionally biased stretch (basic and acidic residues) spans 599-611; sequence AEFKEVNDDEDKK.

This sequence belongs to the heat shock protein 70 family.

Functionally, acts as a chaperone. The chain is Chaperone protein DnaK from Staphylococcus haemolyticus (strain JCSC1435).